The chain runs to 190 residues: Class III hydrophobin F (190 aa).

A signal peptide spans 1–18 (MRPITILCTLATLSTTLA). Disulfide bonds link Cys-54-Cys-115, Cys-62-Cys-109, Cys-63-Cys-97, and Cys-116-Cys-131.

It belongs to the fungal hydrophobin family. As to quaternary structure, self-assembles to form functional amyloid fibrils called rodlets. Self-assembly into fibrillar rodlets occurs spontaneously at hydrophobic:hydrophilic interfaces and the rodlets further associate laterally to form amphipathic monolayers.

It is found in the secreted. The protein localises to the cell wall. Aerial growth, conidiation, and dispersal of filamentous fungi in the environment rely upon a capability of their secreting small amphipathic proteins called hydrophobins (HPBs) with low sequence identity. Class I can self-assemble into an outermost layer of rodlet bundles on aerial cell surfaces, conferring cellular hydrophobicity that supports fungal growth, development and dispersal; whereas Class II form highly ordered films at water-air interfaces through intermolecular interactions but contribute nothing to the rodlet structure. RodF and rodG belong to Class III, which contains hydrophobins with intermediate (between classes I and II) or atypical characteristics. RodF, unlike rodA, is not required for rodlet formation. The protein is Class III hydrophobin F of Aspergillus fumigatus (strain ATCC MYA-4609 / CBS 101355 / FGSC A1100 / Af293) (Neosartorya fumigata).